Reading from the N-terminus, the 191-residue chain is UPF0149 protein VC_2476 (191 aa).

This sequence belongs to the UPF0149 family.

The polypeptide is UPF0149 protein VC_2476 (Vibrio cholerae serotype O1 (strain ATCC 39315 / El Tor Inaba N16961)).